Reading from the N-terminus, the 188-residue chain is Elongation factor P (188 aa).

N6-(3,6-diaminohexanoyl)-5-hydroxylysine is present on lysine 34.

It belongs to the elongation factor P family. Post-translationally, may be beta-lysylated on the epsilon-amino group of Lys-34 by the combined action of EpmA and EpmB, and then hydroxylated on the C5 position of the same residue by EpmC (if this protein is present). Lysylation is critical for the stimulatory effect of EF-P on peptide-bond formation. The lysylation moiety may extend toward the peptidyltransferase center and stabilize the terminal 3-CCA end of the tRNA. Hydroxylation of the C5 position on Lys-34 may allow additional potential stabilizing hydrogen-bond interactions with the P-tRNA.

The protein resides in the cytoplasm. The protein operates within protein biosynthesis; polypeptide chain elongation. Functionally, involved in peptide bond synthesis. Alleviates ribosome stalling that occurs when 3 or more consecutive Pro residues or the sequence PPG is present in a protein, possibly by augmenting the peptidyl transferase activity of the ribosome. Modification of Lys-34 is required for alleviation. This is Elongation factor P from Histophilus somni (strain 129Pt) (Haemophilus somnus).